The chain runs to 166 residues: Endoribonuclease YbeY (166 aa).

3 residues coordinate Zn(2+): His132, His136, and His142.

The protein belongs to the endoribonuclease YbeY family. Zn(2+) serves as cofactor.

It localises to the cytoplasm. In terms of biological role, single strand-specific metallo-endoribonuclease involved in late-stage 70S ribosome quality control and in maturation of the 3' terminus of the 16S rRNA. This chain is Endoribonuclease YbeY, found in Clostridium botulinum (strain 657 / Type Ba4).